The primary structure comprises 122 residues: Small ribosomal subunit protein uS13 (122 aa).

Residues 99 to 122 (RGQRTHTNARTRKGPAKAIAGKKK) form a disordered region.

Belongs to the universal ribosomal protein uS13 family. In terms of assembly, part of the 30S ribosomal subunit. Forms a loose heterodimer with protein S19. Forms two bridges to the 50S subunit in the 70S ribosome.

Functionally, located at the top of the head of the 30S subunit, it contacts several helices of the 16S rRNA. In the 70S ribosome it contacts the 23S rRNA (bridge B1a) and protein L5 of the 50S subunit (bridge B1b), connecting the 2 subunits; these bridges are implicated in subunit movement. Contacts the tRNAs in the A and P-sites. The chain is Small ribosomal subunit protein uS13 from Bradyrhizobium sp. (strain BTAi1 / ATCC BAA-1182).